The sequence spans 455 residues: Chromosomal replication initiator protein DnaA 2 (455 aa).

A domain I, interacts with DnaA modulators region spans residues 1–95; that stretch reads MLTCNDCSTW…KRSSPQIAAS (95 aa). The tract at residues 96–112 is domain II; that stretch reads VTKPAVEVSEENKDFQL. The interval 113–328 is domain III, AAA+ region; the sequence is KLNGAYRFDN…GAINKLTAYC (216 aa). Glycine 157, glycine 159, lysine 160, and threonine 161 together coordinate ATP. A domain IV, binds dsDNA region spans residues 329–455; the sequence is LLFNKPLTET…IAIDSPQHFV (127 aa).

The protein belongs to the DnaA family. In terms of assembly, oligomerizes as a right-handed, spiral filament on DNA at oriC.

The protein localises to the cytoplasm. Its function is as follows. Plays an essential role in the initiation and regulation of chromosomal replication. ATP-DnaA binds to the origin of replication (oriC) to initiate formation of the DNA replication initiation complex once per cell cycle. Binds the DnaA box (a 9 base pair repeat at the origin) and separates the double-stranded (ds)DNA. Forms a right-handed helical filament on oriC DNA; dsDNA binds to the exterior of the filament while single-stranded (ss)DNA is stabiized in the filament's interior. The ATP-DnaA-oriC complex binds and stabilizes one strand of the AT-rich DNA unwinding element (DUE), permitting loading of DNA polymerase. After initiation quickly degrades to an ADP-DnaA complex that is not apt for DNA replication. Binds acidic phospholipids. This chain is Chromosomal replication initiator protein DnaA 2, found in Chlamydia muridarum (strain MoPn / Nigg).